The following is a 367-amino-acid chain: UDP-N-acetylglucosamine--N-acetylmuramyl-(pentapeptide) pyrophosphoryl-undecaprenol N-acetylglucosamine transferase (367 aa).

UDP-N-acetyl-alpha-D-glucosamine is bound by residues 21 to 23 (TGG), asparagine 129, arginine 170, serine 198, and glutamine 295.

Belongs to the glycosyltransferase 28 family. MurG subfamily.

It is found in the cell inner membrane. It catalyses the reaction di-trans,octa-cis-undecaprenyl diphospho-N-acetyl-alpha-D-muramoyl-L-alanyl-D-glutamyl-meso-2,6-diaminopimeloyl-D-alanyl-D-alanine + UDP-N-acetyl-alpha-D-glucosamine = di-trans,octa-cis-undecaprenyl diphospho-[N-acetyl-alpha-D-glucosaminyl-(1-&gt;4)]-N-acetyl-alpha-D-muramoyl-L-alanyl-D-glutamyl-meso-2,6-diaminopimeloyl-D-alanyl-D-alanine + UDP + H(+). Its pathway is cell wall biogenesis; peptidoglycan biosynthesis. Functionally, cell wall formation. Catalyzes the transfer of a GlcNAc subunit on undecaprenyl-pyrophosphoryl-MurNAc-pentapeptide (lipid intermediate I) to form undecaprenyl-pyrophosphoryl-MurNAc-(pentapeptide)GlcNAc (lipid intermediate II). This is UDP-N-acetylglucosamine--N-acetylmuramyl-(pentapeptide) pyrophosphoryl-undecaprenol N-acetylglucosamine transferase from Synechococcus sp. (strain JA-2-3B'a(2-13)) (Cyanobacteria bacterium Yellowstone B-Prime).